Reading from the N-terminus, the 1384-residue chain is Contactin-associated protein 1 (1384 aa).

The N-terminal stretch at 1 to 19 is a signal peptide; it reads MMHLRLFCILLAAVSGAEG. The Extracellular portion of the chain corresponds to 20–1283; sequence WGYYGCDEEL…PYYHDEGWVA (1264 aa). An F5/8 type C domain is found at 25-168; that stretch reads CDEELVGPLY…IGLRLGLYGC (144 aa). C25 and C168 are oxidised to a cystine. 3 N-linked (GlcNAc...) asparagine glycosylation sites follow: N120, N128, and N276. Laminin G-like domains follow at residues 203–355 and 389–538; these read FKTE…AFRC and FRTW…FDTC. An intrachain disulfide couples C323 to C355. 3 N-linked (GlcNAc...) asparagine glycosylation sites follow: N420, N499, and N518. Disulfide bonds link C506-C538, C544-C555, C549-C564, and C566-C576. The region spanning 540-577 is the EGF-like 1 domain; it reads ITDRCSPNMCEHDGRCYQSWDDFICYCELTGYKGETCH. Positions 576–795 constitute a Fibrinogen C-terminal domain; it reads CHTPLYKESC…NTISFHTGAA (220 aa). N-linked (GlcNAc...) asparagine glycans are attached at residues N597, N653, N664, N763, N804, N843, N860, N948, and N956. The 144-residue stretch at 813–956 folds into the Laminin G-like 3 domain; the sequence is FRTSAPSGVF…ANASEGTSPN (144 aa). Intrachain disulfides connect C930/C957, C961/C974, C968/C983, and C985/C995. The 40-residue stretch at 957–996 folds into the EGF-like 2 domain; the sequence is CTGHCAHPRLPCFHGGRCVERYSYYTCDCDLTAFDGPYCN. Residues N1078 and N1147 are each glycosylated (N-linked (GlcNAc...) asparagine). One can recognise a Laminin G-like 4 domain in the interval 1088 to 1250; that stretch reads FSTSSAPAVL…VQGELSESNC (163 aa). C1209 and C1250 form a disulfide bridge. A helical membrane pass occupies residues 1284–1304; sequence ILLGFLVAFLLLGLVGMLVLF. Topologically, residues 1305–1384 are cytoplasmic; sequence YLQNHRYKGS…PQILEESRSE (80 aa). A compositionally biased stretch (basic and acidic residues) spans 1319-1328; that stretch reads EPKAAHEYHP. Positions 1319-1384 are disordered; it reads EPKAAHEYHP…PQILEESRSE (66 aa). The SH3-binding signature appears at 1328–1369; it reads PGSKPPLPTSGPAQVPTPTAAPNQAPASAPAPAPTPAPAPGP. Positions 1339–1355 are enriched in low complexity; the sequence is PAQVPTPTAAPNQAPAS. Pro residues predominate over residues 1356 to 1368; sequence APAPAPTPAPAPG. The residue at position 1383 (S1383) is a Phosphoserine.

It belongs to the neurexin family. Interacts with CNTN1/contactin in cis form. Predominantly expressed in brain. Weak expression detected in ovary, pancreas, colon, lung, heart, intestine and testis.

It localises to the membrane. The protein localises to the cell junction. Its subcellular location is the paranodal septate junction. Required, with CNTNAP2, for radial and longitudinal organization of myelinated axons. Plays a role in the formation of functional distinct domains critical for saltatory conduction of nerve impulses in myelinated nerve fibers. Demarcates the paranodal region of the axo-glial junction. In association with contactin involved in the signaling between axons and myelinating glial cells. This Homo sapiens (Human) protein is Contactin-associated protein 1 (CNTNAP1).